Reading from the N-terminus, the 181-residue chain is PLAT domain-containing protein 1 (181 aa).

Residues 1–14 (MARRDVLLPFLLLL) form the signal peptide. Ala15 carries the N-acetylalanine modification. In terms of domain architecture, PLAT spans 29–156 (CVYTFYLRTG…SPYELTAVRN (128 aa)).

As to expression, expressed in root tips, pericycle cells, lateral root primordia, stomata, leaf vasculature, hydathodes and floral organs.

Its subcellular location is the endoplasmic reticulum. The protein localises to the plastid. It localises to the chloroplast. The protein resides in the plastoglobule. Functionally, positive regulator of abiotic stress tolerance involved in the regulation of plant growth. May be a downstream target of the abscisic acid (ABA) signaling pathway. The chain is PLAT domain-containing protein 1 from Arabidopsis thaliana (Mouse-ear cress).